The primary structure comprises 239 residues: Claudin-14 (239 aa).

Topologically, residues Met-1–Gln-7 are cytoplasmic. Residues Leu-8–Pro-28 traverse the membrane as a helical segment. Residues His-29–Arg-81 lie on the Extracellular side of the membrane. The helical transmembrane segment at Ala-82–Met-102 threads the bilayer. Residues Lys-103 to Thr-115 are Cytoplasmic-facing. Residues Thr-116 to Val-136 traverse the membrane as a helical segment. The Extracellular portion of the chain corresponds to Ser-137–Gln-162. A helical membrane pass occupies residues Ala-163 to Leu-183. Over Ser-184 to Val-239 the chain is Cytoplasmic.

This sequence belongs to the claudin family. Expressed in all sensory epithelia of the inner ear vestibular organs, as well as in liver and kidney.

Its subcellular location is the cell junction. The protein localises to the tight junction. It is found in the cell membrane. Its function is as follows. Plays a major role in tight junction-specific obliteration of the intercellular space, through calcium-independent cell-adhesion activity. This Mus musculus (Mouse) protein is Claudin-14 (Cldn14).